A 150-amino-acid chain; its full sequence is Large ribosomal subunit protein bL9 (150 aa).

Belongs to the bacterial ribosomal protein bL9 family.

Its function is as follows. Binds to the 23S rRNA. The chain is Large ribosomal subunit protein bL9 from Lactococcus lactis subsp. cremoris (strain MG1363).